The primary structure comprises 468 residues: Ribulose bisphosphate carboxylase large chain (468 aa).

N6,N6,N6-trimethyllysine is present on Lys-5. Substrate is bound by residues Asn-114 and Thr-164. Lys-166 (proton acceptor) is an active-site residue. Lys-168 lines the substrate pocket. Mg(2+) contacts are provided by Lys-192, Asp-194, and Glu-195. N6-carboxylysine is present on Lys-192. His-285 (proton acceptor) is an active-site residue. 3 residues coordinate substrate: Arg-286, His-318, and Ser-370.

This sequence belongs to the RuBisCO large chain family. Type I subfamily. Heterohexadecamer of 8 large chains and 8 small chains; disulfide-linked. The disulfide link is formed within the large subunit homodimers. Mg(2+) is required as a cofactor. The disulfide bond which can form in the large chain dimeric partners within the hexadecamer appears to be associated with oxidative stress and protein turnover.

The protein resides in the plastid. It is found in the chloroplast. It carries out the reaction 2 (2R)-3-phosphoglycerate + 2 H(+) = D-ribulose 1,5-bisphosphate + CO2 + H2O. The enzyme catalyses D-ribulose 1,5-bisphosphate + O2 = 2-phosphoglycolate + (2R)-3-phosphoglycerate + 2 H(+). Its function is as follows. RuBisCO catalyzes two reactions: the carboxylation of D-ribulose 1,5-bisphosphate, the primary event in carbon dioxide fixation, as well as the oxidative fragmentation of the pentose substrate in the photorespiration process. Both reactions occur simultaneously and in competition at the same active site. The sequence is that of Ribulose bisphosphate carboxylase large chain from Anthospermum herbaceum.